A 140-amino-acid polypeptide reads, in one-letter code: Thioredoxin H9 (140 aa).

A lipid anchor (N-myristoyl glycine) is attached at Gly-2. Residue Cys-4 is the site of S-palmitoyl cysteine attachment. Ser-14 carries the phosphoserine modification. Residues 25–129 (VHLITTKESW…PELQKKVTSI (105 aa)) form the Thioredoxin domain. Active-site nucleophile residues include Cys-57 and Cys-60. A disulfide bridge connects residues Cys-57 and Cys-60. Ser-136 carries the post-translational modification Phosphoserine.

This sequence belongs to the thioredoxin family. Plant H-type subfamily. In terms of tissue distribution, ubiquitous.

The protein resides in the cell membrane. Probable thiol-disulfide oxidoreductase that may play a role in intercellular communication due to its ability to move from cell to cell. This Arabidopsis thaliana (Mouse-ear cress) protein is Thioredoxin H9 (TRX9).